The following is a 495-amino-acid chain: Glutamyl-tRNA(Gln) amidotransferase subunit A (495 aa).

Residues lysine 75 and serine 150 each act as charge relay system in the active site. Serine 174 (acyl-ester intermediate) is an active-site residue.

Belongs to the amidase family. GatA subfamily. Heterotrimer of A, B and C subunits.

The catalysed reaction is L-glutamyl-tRNA(Gln) + L-glutamine + ATP + H2O = L-glutaminyl-tRNA(Gln) + L-glutamate + ADP + phosphate + H(+). Its function is as follows. Allows the formation of correctly charged Gln-tRNA(Gln) through the transamidation of misacylated Glu-tRNA(Gln) in organisms which lack glutaminyl-tRNA synthetase. The reaction takes place in the presence of glutamine and ATP through an activated gamma-phospho-Glu-tRNA(Gln). In Paraburkholderia phytofirmans (strain DSM 17436 / LMG 22146 / PsJN) (Burkholderia phytofirmans), this protein is Glutamyl-tRNA(Gln) amidotransferase subunit A.